The sequence spans 207 residues: Large ribosomal subunit protein uL4 (207 aa).

A disordered region spans residues 49–79 (HKVKSRGEVSGGGKKPWRQKGTGRARAGTSR).

The protein belongs to the universal ribosomal protein uL4 family. As to quaternary structure, part of the 50S ribosomal subunit.

Functionally, one of the primary rRNA binding proteins, this protein initially binds near the 5'-end of the 23S rRNA. It is important during the early stages of 50S assembly. It makes multiple contacts with different domains of the 23S rRNA in the assembled 50S subunit and ribosome. Forms part of the polypeptide exit tunnel. This Heliobacterium modesticaldum (strain ATCC 51547 / Ice1) protein is Large ribosomal subunit protein uL4.